The following is a 71-amino-acid chain: Prokaryotic ubiquitin-like protein Pup (71 aa).

The segment covering 1–18 (MATRDSGGQSQTGRSQQG) has biased composition (low complexity). Positions 1-42 (MATRDSGGQSQTGRSQQGEEIEDVTTEASPEVAERHAEITED) are disordered. Residues 27–65 (EASPEVAERHAEITEDVDDLLDEIDSVLEENAEEFVRGY) form an ARC ATPase binding region. Residues 31 to 60 (EVAERHAEITEDVDDLLDEIDSVLEENAEE) are a coiled coil. E71 is covalently cross-linked (Isoglutamyl lysine isopeptide (Glu-Lys) (interchain with K-? in acceptor proteins)).

Belongs to the prokaryotic ubiquitin-like protein family. As to quaternary structure, strongly interacts with the proteasome-associated ATPase ARC through a hydrophobic interface; the interacting region of Pup lies in its C-terminal half. There is one Pup binding site per ARC hexamer ring.

It participates in protein degradation; proteasomal Pup-dependent pathway. In terms of biological role, protein modifier that is covalently attached to lysine residues of substrate proteins, thereby targeting them for proteasomal degradation. The tagging system is termed pupylation. The chain is Prokaryotic ubiquitin-like protein Pup from Salinispora arenicola (strain CNS-205).